The primary structure comprises 241 residues: Beta-nerve growth factor (241 aa).

The signal sequence occupies residues 1-18 (MSMLFYTLITAFLIGVQA). Positions 19-121 (EPYTDSNVPE…PFNRTHRSKR (103 aa)) are excised as a propeptide. Asn-69 and Asn-114 each carry an N-linked (GlcNAc...) asparagine glycan. 3 cysteine pairs are disulfide-bonded: Cys-136–Cys-201, Cys-179–Cys-229, and Cys-189–Cys-231. A 1-acyl-sn-glycero-3-phospho-(1D-myo-inositol) is bound by residues Arg-171, Tyr-173, and Lys-209. Arg-171 serves as a coordination point for a 1-acyl-sn-glycero-3-phospho-L-serine. Lys-209 is an a 1-acyl-sn-glycero-3-phospho-L-serine binding site.

The protein belongs to the NGF-beta family. As to quaternary structure, homodimer. The homodimer interacts with a single NTRK1 chain. The homodimer interacts with a single NGFR chain. The NGF dimer interacts with a single SORCS2 chain (via extracellular domain). The NGF precursor (proNGF) binds to a receptor complex formed by SORT1 and NGFR, which leads to NGF endocytosis. Both mature NGF and the immature NGF precursor (proNGF) interact with SORCS2 and with the heterodimer formed by SORCS2 and NGFR (via extracellular domains). The NGF precursor (proNGF) has much higher affinity for SORCS2 than mature NGF. The NGF precursor (proNGF) has much higher affinity for SORT1 than mature NGF. Interacts with ADAM10 in a divalent cation-dependent manner. Interacts with SORCS3. Detected in submaxillary gland (at protein level). Highly expressed in male submaxillary gland. Levels are much lower in female submaxillary gland.

It localises to the secreted. The protein localises to the endosome lumen. Nerve growth factor is important for the development and maintenance of the sympathetic and sensory nervous systems. Extracellular ligand for the NTRK1 and NGFR receptors, activates cellular signaling cascades to regulate neuronal proliferation, differentiation and survival. The immature NGF precursor (proNGF) functions as a ligand for the heterodimeric receptor formed by SORCS2 and NGFR, and activates cellular signaling cascades that lead to inactivation of RAC1 and/or RAC2, reorganization of the actin cytoskeleton and neuronal growth cone collapse. In contrast to mature NGF, the precursor form (proNGF) promotes neuronal apoptosis (in vitro). Inhibits metalloproteinase-dependent proteolysis of platelet glycoprotein VI. Binds lysophosphatidylinositol and lysophosphatidylserine between the two chains of the homodimer. The lipid-bound form promotes histamine relase from mast cells, contrary to the lipid-free form. The polypeptide is Beta-nerve growth factor (Ngf) (Mus musculus (Mouse)).